The chain runs to 656 residues: MAKDTFYITTPIYYPSGNLHIGHAYSTVAGDVIARYKRMQGYDVRYLTGTDEHGQKIQEKAQKAGKTELEYLDEMISGIKNLWSKLEISNDDFIRTTEERHKQVVEKVFERLLKQGDIYLGEYEGWYSVPDETYYTESQLVDPVYENGKIVGGKSPDSGHEVELVKEESYFFNINKYTDRLLEFYDENPDFIQPPSRKNEMINNFIKPGLEDLAVSRTSFDWGVRVPSNPKHVVYVWIDALVNYISSLGYLSDDETLFNKYWPADIHLMAKEIVRFHSIIWPILLMALDLPLPKKVFAHGWILMKDGKMSKSKGNVVDPNVLIDRYGLDATRYYLMRELPFGSDGVFTPEAFVERTNYDLANDLGNLVNRTISMINKYFHGELPAYQGPKHELDEKMEAMALETVKSFNDNMESLQFSVALSTVWKFISRTNKYIDETQPWVLAKDENQREMLGNVMAHLVENIRFATILLQPFLTHAPREIFKQLNINNPDLHQLDSLQQYGMLSEAITVTEKPTPIFPRLDTEAEIAYIKESMQPPKSIKQSDEPGKEQIDIKDFDKVEIKAATIIDAENVKKSEKLLKIKVELDNEQRQIVSGIAKFYRPEDIIGKKVAVVTNLKPAKLMGQKSEGMILSAEKDGVLTLISLPSAIPNGAVIK.

The 'HIGH' region motif lies at Tyr-13 to His-23. The short motif at Lys-308–Ser-312 is the 'KMSKS' region element. Lys-311 lines the ATP pocket. Residues Asp-556–Lys-656 enclose the tRNA-binding domain.

This sequence belongs to the class-I aminoacyl-tRNA synthetase family. MetG type 2B subfamily. In terms of assembly, homodimer.

Its subcellular location is the cytoplasm. It carries out the reaction tRNA(Met) + L-methionine + ATP = L-methionyl-tRNA(Met) + AMP + diphosphate. Its function is as follows. Is required not only for elongation of protein synthesis but also for the initiation of all mRNA translation through initiator tRNA(fMet) aminoacylation. The polypeptide is Methionine--tRNA ligase (Staphylococcus epidermidis (strain ATCC 12228 / FDA PCI 1200)).